The sequence spans 477 residues: MQNFEVIIGIEVHTALNTKTKMFSNTPTSHKSMANTLINEIDLALPGTLPSVNQEVVHKGLFLANALHMHTNHQFIAFDRKHYYYLDLPKGYQITQNYFPIGQNGYIQITDENNNPKKIRIKQIHLEEDTAKQTSVNNQVYLDYNRAGWPLIEIVSEADLRSAQETVLFLEELRKILLFNDISDAKMEDGSLRVDVNISIRPRGAKSFGTKVEIKNINSISNVAKAINYEYNRQLNLILLNQSVEQQTRRFDDSTNTTVFMRSKNDAINYRYIRELNIAPIYLSDEYVSQLLSTKPYSINDLRQELLQKGLVSSAIEQLLGDGPLFKAFKYVNKIVNNPSSVYKWLCLEFIGLINKNTQIIEDISMELLQKIGAMIVLFDQTLINGKQTKTILEKIYLTNKDPQTLIKELGFEQITDENEITNLWNQILANNQEMLLQYEERPDRVEKFFMGEMMKLTKAQANPTISFNILKKILQK.

The protein belongs to the GatB/GatE family. GatB subfamily. In terms of assembly, heterotrimer of A, B and C subunits.

It catalyses the reaction L-glutamyl-tRNA(Gln) + L-glutamine + ATP + H2O = L-glutaminyl-tRNA(Gln) + L-glutamate + ADP + phosphate + H(+). It carries out the reaction L-aspartyl-tRNA(Asn) + L-glutamine + ATP + H2O = L-asparaginyl-tRNA(Asn) + L-glutamate + ADP + phosphate + 2 H(+). Allows the formation of correctly charged Asn-tRNA(Asn) or Gln-tRNA(Gln) through the transamidation of misacylated Asp-tRNA(Asn) or Glu-tRNA(Gln) in organisms which lack either or both of asparaginyl-tRNA or glutaminyl-tRNA synthetases. The reaction takes place in the presence of glutamine and ATP through an activated phospho-Asp-tRNA(Asn) or phospho-Glu-tRNA(Gln). The protein is Aspartyl/glutamyl-tRNA(Asn/Gln) amidotransferase subunit B of Ureaplasma urealyticum serovar 10 (strain ATCC 33699 / Western).